The chain runs to 99 residues: Large ribosomal subunit protein uL23 (99 aa).

The protein belongs to the universal ribosomal protein uL23 family. In terms of assembly, part of the 50S ribosomal subunit. Contacts protein L29, and trigger factor when it is bound to the ribosome.

In terms of biological role, one of the early assembly proteins it binds 23S rRNA. One of the proteins that surrounds the polypeptide exit tunnel on the outside of the ribosome. Forms the main docking site for trigger factor binding to the ribosome. The protein is Large ribosomal subunit protein uL23 of Pseudomonas savastanoi pv. phaseolicola (strain 1448A / Race 6) (Pseudomonas syringae pv. phaseolicola (strain 1448A / Race 6)).